The chain runs to 1165 residues: Protein hsr-9 (1165 aa).

Disordered stretches follow at residues 1–26 (MASS…PTTT), 70–578 (AEDE…TEME), 608–713 (KYSM…IPLK), and 874–913 (TRAR…EEEE). Low complexity predominate over residues 16-26 (TVTQTSLPTTT). Basic and acidic residues-rich tracts occupy residues 98 to 114 (KDAK…KSES), 123 to 140 (TFEK…KLDI), and 149 to 162 (DTEK…KVVG). Acidic residues-rich tracts occupy residues 163 to 179 (DEDE…DEDE), 211 to 230 (EKEE…EVEV), and 280 to 289 (GESEANEENQ). The segment covering 306–317 (ATVSSTPSSNTP) has biased composition (polar residues). Residues 397-408 (NTEHPTEEETPK) are compositionally biased toward basic and acidic residues. The segment covering 415–431 (SAASSSATSSAVPTPRS) has biased composition (low complexity). Positions 446-461 (LQEKETEDPTKTHDTN) are enriched in basic and acidic residues. The span at 533–543 (DPIEEADETIE) shows a compositional bias: acidic residues. A compositionally biased stretch (low complexity) spans 554 to 563 (AAKSAPSSSK). Basic and acidic residues-rich tracts occupy residues 662-671 (KKEEEHHEND) and 694-708 (SEAS…KKEP). A BRCT domain is found at 923–1028 (IGKNIFTGKV…KCVDYTDYVL (106 aa)).

As to expression, expressed in germ cells.

The protein localises to the nucleus. May have a role in DNA double-strand break repair following gamma-irradiation. The polypeptide is Protein hsr-9 (Caenorhabditis elegans).